The primary structure comprises 2470 residues: Serine/threonine-protein kinase mTor (2470 aa).

HEAT repeat units lie at residues 172–209, 746–785, 791–829, 835–873, 962–999, 1043–1080, 1083–1122, and 1124–1160; these read QHILTFFEVIFNAIFDPKPAIRESAGEALRAALIVTAQ, SYMNPILKALVPKLHEPESNPGVILNVLRTIGDLAEVNGG, LWADDLLSILLEMLGDAGSPDKRGVALWTLGQLISATGR, HKYPVLIDILINFLKTEQRRSIRRETIRVLGLLGAMDPY, PYLAQVLPNLLDNVRTADNNLREFLFQQLAILVAFVKL, DYLAELIPQILRVLQHDNSKDRMVTRRLLQALQKFGST, YYLPLILPPIVKLFDSPYVPQQVSMVALETINNLACQLDF, and DFSSRIIHPLVRVLDAEPELRDQAMTTLRSLAKQLGK. The FAT domain occupies 1349-1903; it reads LLGTRAMACR…VYPLTVASKS (555 aa). TPR repeat units follow at residues 1407-1440 and 1718-1751; these read ANELNVQGRWYEKLHNWDEALEHYERNLKTDSSD and MATWQNKLQDSIRPDAIQGALECFEKATSYDPNW. Residues 1854 to 1891 form an HEAT 9 repeat; that stretch reads NTWLQVIPQLIARIDTHRQLVGQLIHQLLMDIGKNHPQ. The PI3K/PI4K catalytic domain maps to 2077-2389; the sequence is IKTNLQVITS…SLSNSVEDSL (313 aa). The G-loop stretch occupies residues 2083–2089; it reads VITSKQR. A catalytic loop region spans residues 2256–2264; the sequence is GLGDRHPSN. The tract at residues 2276 to 2301 is activation loop; the sequence is HIDFGDCFEVAMTREKFPEKIPFRLT. Positions 2364–2389 are disordered; sequence AGAGAPGGRGGSGMQDSLSNSVEDSL. Residues 2367 to 2376 show a composition bias toward gly residues; the sequence is GAPGGRGGSG. The segment covering 2377–2386 has biased composition (polar residues); sequence MQDSLSNSVE. The FATC domain maps to 2438 to 2470; the sequence is KSVNEQSQVELLIQQATNNENLCQCYIGWCPFW.

The protein belongs to the PI3/PI4-kinase family. In terms of assembly, may be part of a minimal complex, TORC1, consisting of mTor, raptor and lst8. May be part of a minimal complex, TORC2, consisting of mTor, rictor and lst8. Self-associates; assembles into homomultimeric complexes. Component of a multiprotein complex.

The enzyme catalyses L-seryl-[protein] + ATP = O-phospho-L-seryl-[protein] + ADP + H(+). It carries out the reaction L-threonyl-[protein] + ATP = O-phospho-L-threonyl-[protein] + ADP + H(+). Functionally, promotes cell and tissue growth, maintains tissue homeostatis and controls responses to environmental stress and aging. Regulates growth during animal development by coupling growth factor signaling to nutrient availability. Central regulators of autophagy. May be involved in atg1 phosphorylation. May also be involved, directly or indirectly, in the control of neuronal function. Phosphorylates S6K/p70S6K, in vitro. May regulate the activity of S6K. Overexpression inhibits growth and reduces cell size. Affects the timing of neuronal cell differentiation. Hyperactivation of the signaling leads to accelerated differentiation, whereas inhibition of the signaling retards differentiation. Thus, in addition to controlling growth of the cell in which it resides, it can also influence growth of distant cells and organs during development via a humoral mechanism. As part of the TORC1 complex regulates energy homeostasis and promotes certain aspects of larval growth by negatively regulating REPTOR. REPTOR functions downstream of TORC1 to regulate the expression of stress response genes in response to TORC1 inhibition resulting from nutrient deprivation. When TORC1 activity is high it phosphorylates REPTOR which inhibits its recruitment into the nucleus and antagonizes their function. This function is essential under normal feeding conditions to promote TORC1-dependent growth during larval development and, in adults and larvae to prevent the REPTOR-dependent expression of nutrient stress response genes. In short, during development, it primarily controls growth, whereas in the adult, where there is relatively little growth, it controls aging and other aspects of nutrient-related physiology. Rag GTPases act as activators of TORC1 in response to amino acid signals. This chain is Serine/threonine-protein kinase mTor, found in Drosophila melanogaster (Fruit fly).